A 141-amino-acid chain; its full sequence is Large ribosomal subunit protein uL11 (141 aa).

The protein belongs to the universal ribosomal protein uL11 family. As to quaternary structure, part of the ribosomal stalk of the 50S ribosomal subunit. Interacts with L10 and the large rRNA to form the base of the stalk. L10 forms an elongated spine to which L12 dimers bind in a sequential fashion forming a multimeric L10(L12)X complex. Post-translationally, one or more lysine residues are methylated.

Functionally, forms part of the ribosomal stalk which helps the ribosome interact with GTP-bound translation factors. This chain is Large ribosomal subunit protein uL11, found in Methylacidiphilum infernorum (isolate V4) (Methylokorus infernorum (strain V4)).